The primary structure comprises 420 residues: E3 ubiquitin-protein ligase pellino homolog 2 (420 aa).

One can recognise an FHA; atypical domain in the interval E15–E202.

This sequence belongs to the pellino family. In terms of assembly, interacts with TRAF6, IRAK1, IRAK4 and MAP3K7. Interacts with BCL10; this interaction is impaired by SOCS3. Post-translationally, phosphorylated by IRAK1 and IRAK4 enhancing its E3 ligase activity.

It carries out the reaction S-ubiquitinyl-[E2 ubiquitin-conjugating enzyme]-L-cysteine + [acceptor protein]-L-lysine = [E2 ubiquitin-conjugating enzyme]-L-cysteine + N(6)-ubiquitinyl-[acceptor protein]-L-lysine.. It functions in the pathway protein modification; protein ubiquitination. E3 ubiquitin ligase catalyzing the covalent attachment of ubiquitin moieties onto substrate proteins. Involved in the TLR and IL-1 signaling pathways via interaction with the complex containing IRAK kinases and TRAF6. Mediates IL1B-induced IRAK1 'Lys-63'-linked polyubiquitination and possibly 'Lys-48'-linked ubiquitination. May be important for LPS- and IL1B-induced MAP3K7-dependent, but not MAP3K3-dependent, NF-kappa-B activation. Can activate the MAP (mitogen activated protein) kinase pathway leading to activation of ELK1. The chain is E3 ubiquitin-protein ligase pellino homolog 2 (PELI2) from Homo sapiens (Human).